The chain runs to 122 residues: Large ribosomal subunit protein uL14 (122 aa).

It belongs to the universal ribosomal protein uL14 family. As to quaternary structure, part of the 50S ribosomal subunit. Forms a cluster with proteins L3 and L19. In the 70S ribosome, L14 and L19 interact and together make contacts with the 16S rRNA in bridges B5 and B8.

Functionally, binds to 23S rRNA. Forms part of two intersubunit bridges in the 70S ribosome. The sequence is that of Large ribosomal subunit protein uL14 from Sinorhizobium fredii (strain NBRC 101917 / NGR234).